A 1885-amino-acid polypeptide reads, in one-letter code: Chitin synthase 5 (1885 aa).

The 789-residue stretch at 1–789 folds into the Myosin motor domain; the sequence is MATRGNVPAH…SIALTGSQAA (789 aa). Position 99 to 106 (99 to 106) interacts with ATP; the sequence is GESGSGKT. Residues asparagine 219 and asparagine 429 are each glycosylated (N-linked (GlcNAc...) asparagine). The disordered stretch occupies residues 601-649; it reads KPLRMPSVSRKKHDQLRRMASRRADRSPAPQEEEPLPGTEEAKVRRTKP. The segment covering 609 to 621 has biased composition (basic residues); the sequence is SRKKHDQLRRMAS. Positions 666–690 are actin-binding; that stretch reads LDNITKSLTAPNVNNYFVFCLKPND. A glycan (N-linked (GlcNAc...) asparagine) is linked at asparagine 668. Residues 794–817 are disordered; sequence GDIGSPSRPDTPGHNPFSDSKARL. Transmembrane regions (helical) follow at residues 894 to 914 and 929 to 949; these read WLAI…KWIG and FAIN…IIVF. Positions 957-1016 constitute a Cytochrome b5 heme-binding domain; it reads QNVYSAAELSAHDGKGKHSAYVAIRGQVFDLGAFMPNHYPKIIPQSSLKKYAGVDATGLF. N-linked (GlcNAc...) asparagine glycosylation is found at asparagine 1043 and asparagine 1068. A helical transmembrane segment spans residues 1205–1225; that stretch reads ILLAVSILLCSVIGFKFFAAL. Asparagine 1462 and asparagine 1568 each carry an N-linked (GlcNAc...) asparagine glycan. 3 helical membrane-spanning segments follow: residues 1599–1619, 1626–1646, and 1653–1673; these read LLST…IVLL, VPLT…IIFI, and MIGW…GLPL. Asparagine 1759 and asparagine 1790 each carry an N-linked (GlcNAc...) asparagine glycan. Positions 1827–1882 constitute a DEK-C domain; that stretch reads LPTDDMLLNEIRDILRTADLMTVTKKGIKQELERRFNVNLDMKRAYIGSATEAILS.

It in the N-terminal section; belongs to the TRAFAC class myosin-kinesin ATPase superfamily. Myosin family. The protein in the C-terminal section; belongs to the chitin synthase family. Class V subfamily. In terms of processing, maximal activity requires trypsin activation, suggesting a zymogenic nature.

The protein resides in the cell membrane. The protein localises to the membrane. It catalyses the reaction [(1-&gt;4)-N-acetyl-beta-D-glucosaminyl](n) + UDP-N-acetyl-alpha-D-glucosamine = [(1-&gt;4)-N-acetyl-beta-D-glucosaminyl](n+1) + UDP + H(+). In terms of biological role, polymerizes chitin, a structural polymer of the cell wall and septum, by transferring the sugar moiety of UDP-GlcNAc to the non-reducing end of the growing chitin polymer. CHS5 is required for the sustained growth at 37 degrees Celsius and is of critical importance for virulence. Especially important at infection temperatures for maintaining the cell wall integrity of developing yeast buds, elongating tips of hyphae, and random sites of expansion in sclerotic forms. The protein is Chitin synthase 5 of Exophiala dermatitidis (strain ATCC 34100 / CBS 525.76 / NIH/UT8656) (Black yeast).